A 691-amino-acid polypeptide reads, in one-letter code: MNKNFSSMIDRYKHQQLRIGLVSPQQISAWATKILPNGEIVGEVKKPYTFLYKTNKPEKDGLFCERIFGPIKSGICACGNYRVIGDEKEEPKFCEQCGVEFVDSRIRRYRMGCIKLACPVTHVWYLKRLPSYIANILDKPIKELEGLVYCDFYFARPITKKPTFLRLRGLLKYEIQSWKSSIPLFFTTQGFDTFRNREISTGAGAIREQLADLDLKISLENSLLEWKYLGEEERIGNEWEDRKAGRRKGFLVRRMELVKHFIRTNIEPEWMVLSLLPVLPPELRPIIQIDGGKLMSSDINELYRRVIYRNNTLTDLLTTSRSTPGELVMCQEKLVQEAVDTLLDNGIRGQPMRDGHNKVYKSFSDIIEGKEGRFRETLLGKRVDYSGRSVIVVGPSLSLHRCGLPRKIAIELFQPFVIRDLIRQHLASNIGVAKSKIREKEPIIWEILQEVMRGHPVLLNRAPTLHRLGIQAFQPVLVEGHVLCLHPLVCKGFNADFDGDQMAVHVPLSLEAQAEARLLMFSHMNLLSPAIGDPISVPTQDMLIGLYVLTSDNRRDICTNRYTKCNIQTLQTKSSDSSNSKSKNWYKNRPFFCNSYDAIGAYRQKQINLESPLWLRWRLDRRVITSSETPIEVHYESRGTFSEIYGHFLIVRSLKKKILFIYLRTTVGHISLYREIEEAIQGFSRAWSSDT.

Belongs to the RNA polymerase beta' chain family. RpoC1 subfamily. As to quaternary structure, in plastids the minimal PEP RNA polymerase catalytic core is composed of four subunits: alpha, beta, beta', and beta''. When a (nuclear-encoded) sigma factor is associated with the core the holoenzyme is formed, which can initiate transcription.

The protein localises to the plastid. The enzyme catalyses RNA(n) + a ribonucleoside 5'-triphosphate = RNA(n+1) + diphosphate. In terms of biological role, DNA-dependent RNA polymerase catalyzes the transcription of DNA into RNA using the four ribonucleoside triphosphates as substrates. This is DNA-directed RNA polymerase subunit beta' (rpoC1) from Cuscuta reflexa (Southern Asian dodder).